The following is a 289-amino-acid chain: Coiled-coil domain-containing protein 137 (289 aa).

3 disordered regions span residues 1 to 64, 149 to 184, and 204 to 225; these read MAGA…QEIP, EVQA…EKAA, and QPPE…GRRS. Low complexity predominate over residues 7 to 20; it reads GAAVSRVQAGPGSP. Ser19 carries the phosphoserine modification. A coiled-coil region spans residues 155 to 197; that stretch reads KEKSEQKKAKKAFQKRRLDKVRRKKEEKAADRLEQELLRDTVK. Residues 162 to 177 are compositionally biased toward basic residues; that stretch reads KAKKAFQKRRLDKVRR. A Phosphoserine modification is found at Ser233. Positions 247–273 form a coiled coil; it reads RQRIVEEERERAVQAYRALKQRQQQLH. The tract at residues 265–289 is disordered; sequence LKQRQQQLHGERPHLTSRKKPEPQL. A compositionally biased stretch (basic and acidic residues) spans 273-289; that stretch reads HGERPHLTSRKKPEPQL.

The protein localises to the chromosome. The polypeptide is Coiled-coil domain-containing protein 137 (CCDC137) (Homo sapiens (Human)).